A 434-amino-acid polypeptide reads, in one-letter code: Enolase (434 aa).

Residue Q163 participates in (2R)-2-phosphoglycerate binding. E205 acts as the Proton donor in catalysis. Positions 242, 291, and 318 each coordinate Mg(2+). (2R)-2-phosphoglycerate contacts are provided by K343, R372, S373, and K394. The Proton acceptor role is filled by K343.

The protein belongs to the enolase family. Mg(2+) serves as cofactor.

The protein resides in the cytoplasm. It localises to the secreted. The protein localises to the cell surface. It carries out the reaction (2R)-2-phosphoglycerate = phosphoenolpyruvate + H2O. Its pathway is carbohydrate degradation; glycolysis; pyruvate from D-glyceraldehyde 3-phosphate: step 4/5. Its function is as follows. Catalyzes the reversible conversion of 2-phosphoglycerate (2-PG) into phosphoenolpyruvate (PEP). It is essential for the degradation of carbohydrates via glycolysis. In Streptococcus thermophilus (strain CNRZ 1066), this protein is Enolase.